Reading from the N-terminus, the 406-residue chain is Probable sodium/metabolite cotransporter BASS1, chloroplastic (406 aa).

Residues Met1 to Arg64 constitute a chloroplast transit peptide. Transmembrane regions (helical) follow at residues Val98 to Leu118, Ala123 to Met143, Leu152 to Val172, Pro187 to Val209, Val217 to Leu237, Met252 to Leu272, Gly278 to Leu298, Leu315 to Leu335, and Val376 to Trp396.

This sequence belongs to the bile acid:sodium symporter (BASS) (TC 2.A.28) family.

The protein localises to the membrane. Its subcellular location is the plastid. It localises to the chloroplast envelope. Its function is as follows. May function as sodium-coupled metabolite transporter across the chloroplast envelope. The chain is Probable sodium/metabolite cotransporter BASS1, chloroplastic (BASS1) from Oryza sativa subsp. japonica (Rice).